The following is a 78-amino-acid chain: U-scoloptoxin(04)-Er1d (78 aa).

The N-terminal stretch at Met-1–Ala-24 is a signal peptide. Positions Arg-25–Arg-28 are excised as a propeptide.

This sequence belongs to the scoloptoxin-04 family. Contains 2 disulfide bonds. As to expression, expressed by the venom gland.

The protein resides in the secreted. The chain is U-scoloptoxin(04)-Er1d from Ethmostigmus rubripes (Giant centipede).